A 239-amino-acid polypeptide reads, in one-letter code: Vesicle-associated protein 1-2 (239 aa).

At methionine 1 the chain carries N-acetylmethionine. Residues 1-215 (MSNELLTIDP…RRESKRSKSG (215 aa)) lie on the Cytoplasmic side of the membrane. N-acetylserine; in Vesicle-associated protein 1-2, N-terminally processed is present on serine 2. The MSP domain occupies 5-125 (LLTIDPVDLQ…EETKLRVVYV (121 aa)). Residues 123–174 (VYVAPPRPPSPVREGSEEGSSPRASVSDNGNASDFTAAPRFSADRVDAQDNS) form a disordered region. Phosphoserine is present on serine 132. Residues 140 to 156 (EGSSPRASVSDNGNASD) show a composition bias toward polar residues. Serine 164 bears the Phosphoserine mark. Residues 169–215 (DAQDNSSEARALVTKLTEEKNSAVQLNNRLQQELDQLRRESKRSKSG) adopt a coiled-coil conformation. The helical; Anchor for type IV membrane protein transmembrane segment at 216 to 236 (GIPFMYVLLVGLIGLILGYIM) threads the bilayer.

Belongs to the VAMP-associated protein (VAP) (TC 9.B.17) family. Interacts with ORP3A. Binds to VLG at the endomembrane system.

Its subcellular location is the endoplasmic reticulum membrane. Functionally, vesicle-associated protein that binds the oxysterol-binding protein ORP3A and allows its targeting to the ER. This Arabidopsis thaliana (Mouse-ear cress) protein is Vesicle-associated protein 1-2.